The chain runs to 206 residues: mRNA-decapping protein D9 (206 aa).

Positions 23–206 constitute a Nudix hydrolase domain; it reads KKTHVFAICV…FIYNTLLYSK (184 aa). The Nudix box motif lies at 104–125; it reads GKLNKSETIDDCIRREIKEETD. Glu-110 is a Mg(2+) binding site. Glu-119 (nucleophile) is an active-site residue. Mg(2+)-binding residues include Glu-123 and Asp-144.

This sequence belongs to the Nudix hydrolase family. The cofactor is Mg(2+). Requires Mn(2+) as cofactor.

Its function is as follows. Decapping enzyme required for the removal of the 5'-end m7GpppN cap tethered to viral and host mRNAs to allow their decay in cells. May therefore accelerate viral and cellular mRNA turnover to eliminate competing host mRNAs and allow stage-specific synthesis of viral proteins. Acceleration of the turnover of cellular transcripts may even promote the shutoff of host protein synthesis. Does not cleave unmethylated RNAs or RNAs shorter than 24 nucleotides. This is mRNA-decapping protein D9 from Oryctolagus cuniculus (Rabbit).